Here is a 293-residue protein sequence, read N- to C-terminus: Large ribosomal subunit protein uL18 (293 aa).

Residues 247-263 (IRANPAHEKKQPRDGLV) are compositionally biased toward basic and acidic residues. The tract at residues 247–283 (IRANPAHEKKQPRDGLVKKRWNRAKMSLKQKRDRVKQ) is disordered. Residues 264-283 (KKRWNRAKMSLKQKRDRVKQ) show a composition bias toward basic residues.

It belongs to the universal ribosomal protein uL18 family. In terms of assembly, component of the large ribosomal subunit (LSU).

It localises to the cytoplasm. The protein localises to the nucleus. Component of the ribosome, a large ribonucleoprotein complex responsible for the synthesis of proteins in the cell. The small ribosomal subunit (SSU) binds messenger RNAs (mRNAs) and translates the encoded message by selecting cognate aminoacyl-transfer RNA (tRNA) molecules. The large subunit (LSU) contains the ribosomal catalytic site termed the peptidyl transferase center (PTC), which catalyzes the formation of peptide bonds, thereby polymerizing the amino acids delivered by tRNAs into a polypeptide chain. The nascent polypeptides leave the ribosome through a tunnel in the LSU and interact with protein factors that function in enzymatic processing, targeting, and the membrane insertion of nascent chains at the exit of the ribosomal tunnel. The chain is Large ribosomal subunit protein uL18 (RPL5) from Suberites domuncula (Sponge).